The following is a 4836-amino-acid chain: E3 ubiquitin-protein ligase HERC2 (4836 aa).

The disordered stretch occupies residues 58-90 (LPLRKDDGVDAQSGTKKEDLNDKEKKEEEETPA). Residues 72 to 85 (TKKEDLNDKEKKEE) are compositionally biased toward basic and acidic residues. A Phosphothreonine modification is found at threonine 273. The RCC1 1-1 repeat unit spans residues 416–462 (PTSHKGSLQEVIGWGLIGWKYYANVIGPIQCEGLASLGVMQVACAEK). The stretch at 463–513 (RFLILSRNGRVYTQAYNSDMLAPQLVQGLASRNIVKIAAHSDGHHYLALAA) is one RCC1 1-2 repeat. An RCC1 1-3 repeat occupies 514-569 (TGEVYSWGCGDGGRLGHGDTVPLEEPKVISAFSGKQAGKHVVHIACGSTYSAAITA). An RCC1 1-4 repeat occupies 570-621 (EGELYTWGRGNYGRLGHGSSEDEAIPMLVAGLKGLKVIDVACGSGDAQTLAV). An RCC1 1-5 repeat occupies 624-675 (NGQVWSWGDGDYGKLGRGGSDGCKTPKLIEKLQDLDVIKVRCGSQFSIALTK). Threonine 648 carries the phosphothreonine modification. The stretch at 676–727 (DGQVYSWGKGDNQRLGHGTEEHVRYPKLLEGLQGKKVIDVAAGSTHCLALTE) is one RCC1 1-6 repeat. Residues 729–779 (SEVHSWGSNDQCQHFDTLRVTKPEPTALPGLDSKHIVGIACGPAQSFAWSS) form an RCC1 1-7 repeat. A coiled-coil region spans residues 948 to 981 (ALNAAITAEIQDIEAKKEAQKEKEIDEQEASAST). The Cytochrome b5 heme-binding domain maps to 1208 to 1284 (VTLIRKADLE…MHAFCVGQYL (77 aa)). Serine 1578 carries the phosphoserine modification. The MIB/HERC2 domain maps to 1860 to 1933 (SGPELAAMMK…KYDLKLVELP (74 aa)). Serine 1943 is subject to Phosphoserine. The residue at position 1945 (threonine 1945) is a Phosphothreonine. Residues 2351–2376 (GTGTLQTDDGAAASPDLGDMSPEGPQ) are disordered. Serine 2455 is modified (phosphoserine). The CPH domain occupies 2555-2631 (RADFLSNDDY…RYIHVELIGY (77 aa)). The ZZ-type zinc-finger motif lies at 2704 to 2756 (HPGVTCDGCQTFPINGSRFKCRNCDDFDFCETCFKTKKHNTRHTFGRINEPGQ). Zn(2+) contacts are provided by cysteine 2709, cysteine 2712, cysteine 2724, cysteine 2727, cysteine 2733, cysteine 2736, histidine 2742, and histidine 2746. The 178-residue stretch at 2760-2937 (FCGRSGKQLK…ASDNEEEEDD (178 aa)) folds into the DOC domain. Residues 2928-2947 (ASDNEEEEDDKGSTGSLIRK) form a disordered region. The residue at position 2929 (serine 2929) is a Phosphoserine. The RCC1 2-1 repeat unit spans residues 2959 to 3010 (RTKVFVWGLNDKDQLGGLKGSKIKVPSFSETLSALNVVQVAGGSKSLFAVTV). An RCC1 2-2 repeat occupies 3011–3065 (EGKVYSCGEATNGRLGLGMSSGTVPIPRQITALSSYVVKKVAVHSGGRHATALTV). One copy of the RCC1 2-3 repeat lies at 3066–3117 (DGKVFSWGEGDDGKLGHFSRMNCDKPRLIEALKTKRIRDIACGSSHSAALTS). Residues 3119 to 3169 (GELYTWGLGEYGRLGHGDNTTQLKPKMVKVLLGHRVIQVACGSRDAQTLAL) form an RCC1 2-4 repeat. Residues 3172–3223 (EGLVFSWGDGDFGKLGRGGSEGCNIPQNIERLNGQGVCQIECGAQFSLALTK) form an RCC1 2-5 repeat. The stretch at 3225–3275 (GVVWTWGKGDYFRLGHGSDVHVRKPQVVEGLRGKKIVHVAVGALHCLAVTD) is one RCC1 2-6 repeat. The RCC1 2-7 repeat unit spans residues 3276–3327 (SGQVYAWGDNDHGQQGNGTTTVNRKPTLVQGLEGQKITRVACGSSHSVAWTT). Disordered stretches follow at residues 3479–3499 (DAVT…RPFI), 3517–3537 (KTKE…QSLD), and 3604–3632 (SQSG…SGTV). The segment covering 3480 to 3495 (AVTPSAVTPSAPSASS) has biased composition (low complexity). 2 stretches are compositionally biased toward polar residues: residues 3604–3613 (SQSGRLSSQP) and 3620–3631 (HPYTDDTSTSGT). The RCC1 3-1 repeat unit spans residues 3953-4004 (SGTIYGWGHNHRGQLGGIEGAKVKVPTPCEALATLRPVQLIGGEQTLFAVTA). The stretch at 4006–4058 (GKLYATGYGAGGRLGIGGTESVSTPTLLESIQHVFIKKVAVNSGGKHCLALSS) is one RCC1 3-2 repeat. The stretch at 4060 to 4110 (GEVYSWGEAEDGKLGHGNRSPCDRPRVIESLRGIEVVDVAAGGAHSACVTA) is one RCC1 3-3 repeat. An RCC1 3-4 repeat occupies 4112 to 4164 (GDLYTWGKGRYGRLGHSDSEDQLKPKLVEALQGHRVIDIACGSGDAQTLCLTD). An RCC1 3-5 repeat occupies 4166–4216 (DTVWSWGDGDYGKLGRGGSDGCKVPMKIDSLTGLGVVKVECGSQFSVALTK). The stretch at 4218–4268 (GAVYTWGKGDYHRLGHGSDDHVRRPRQVQGLQGKKVIAIATGSLHCVCCTE) is one RCC1 3-6 repeat. An RCC1 3-7 repeat occupies 4270–4320 (GEVYTWGDNDEGQLGDGTTNAIQRPRLVAALQGKKVNRVACGSAHTLAWST). An HECT domain is found at 4459-4796 (DSLLLPHRVW…IHFCKSIDTD (338 aa)). Catalysis depends on cysteine 4764, which acts as the Glycyl thioester intermediate. The segment at 4806-4836 (EPAADDSSEDSDNEDADSFASDSTQDYLTGH) is disordered. A compositionally biased stretch (acidic residues) spans 4808 to 4822 (AADDSSEDSDNEDAD). 3 positions are modified to phosphoserine: serine 4812, serine 4813, and serine 4816. Threonine 4829 is modified (phosphothreonine).

Interacts (when phosphorylated at Thr-4829 and sumoylated) with RNF8 (via FHA domain); this interaction increases after ionising radiation (IR) treatment. Interacts with XPA. Interacts with NEURL4. Via its interaction with NEURL4, may indirectly interact with CCP110 and CEP97. Post-translationally, phosphorylation at Thr-4829 is required for interaction with RNF8. Sumoylated with SUMO1 by PIAS4 in response to double-strand breaks (DSBs), promoting the interaction with RNF8. Highest levels are found in brain and testis with lower levels in heart, lung, liver, skeletal muscle and kidney. Little expression detected in spleen.

The protein resides in the cytoplasm. It localises to the cytoskeleton. The protein localises to the microtubule organizing center. It is found in the centrosome. Its subcellular location is the centriole. The protein resides in the nucleus. It carries out the reaction S-ubiquitinyl-[E2 ubiquitin-conjugating enzyme]-L-cysteine + [acceptor protein]-L-lysine = [E2 ubiquitin-conjugating enzyme]-L-cysteine + N(6)-ubiquitinyl-[acceptor protein]-L-lysine.. Its pathway is protein modification; protein ubiquitination. Functionally, E3 ubiquitin-protein ligase that regulates ubiquitin-dependent retention of repair proteins on damaged chromosomes. Recruited to sites of DNA damage in response to ionizing radiation (IR) and facilitates the assembly of UBE2N and RNF8 promoting DNA damage-induced formation of 'Lys-63'-linked ubiquitin chains. Acts as a mediator of binding specificity between UBE2N and RNF8. Involved in the maintenance of RNF168 levels. E3 ubiquitin-protein ligase that promotes the ubiquitination and proteasomal degradation of XPA which influences the circadian oscillation of DNA excision repair activity. By controlling the steady-state expression of the IGF1R receptor, indirectly regulates the insulin-like growth factor receptor signaling pathway. Also modulates iron metabolism by regulating the basal turnover of FBXL5. This chain is E3 ubiquitin-protein ligase HERC2, found in Mus musculus (Mouse).